The primary structure comprises 235 residues: Auracyanin-B (235 aa).

Positions 1 to 21 (MSWRGSGRSNFRSRSSSNGGS) are enriched in low complexity. Disordered stretches follow at residues 1–27 (MSWRGSGRSNFRSRSSSNGGSTFSGGS) and 64–107 (ATPR…NVVN). The first 56 residues, 1–56 (MSWRGSGRSNFRSRSSSNGGSTFSGGSAGGPPLIVMMGLAFGAGLIMLIVMIASNA), serve as a signal peptide directing secretion. Residues 57 to 80 (TAGGFVAATPRPTATPRPTAAPAP) constitute a propeptide that is removed on maturation. A compositionally biased stretch (pro residues) spans 69–86 (TATPRPTAAPAPTQPPAA). A compositionally biased stretch (low complexity) spans 87–100 (QPTTAPATQAANAP). The region spanning 111 to 235 (AQTVEVRAAP…GMKGTLTVTP (125 aa)) is the Plastocyanin-like domain. Cu cation contacts are provided by His152, Cys217, His222, and Met227.

This sequence belongs to the multicopper oxidase family. The cofactor is Cu cation. Post-translationally, glycosylated.

The protein resides in the cell membrane. Probably a soluble electron acceptor for the integral membrane protein electron transfer alternative complex III (ACIII). This chain is Auracyanin-B, found in Chloroflexus aurantiacus (strain ATCC 29366 / DSM 635 / J-10-fl).